The sequence spans 218 residues: uncharacterized protein (218 aa).

Transmembrane regions (helical) follow at residues Val-19 to Ile-39, Phe-92 to Val-112, Tyr-124 to Ala-144, Leu-161 to Phe-181, and Tyr-196 to Leu-216.

It localises to the cell membrane. This is an uncharacterized protein from Methanocaldococcus jannaschii (strain ATCC 43067 / DSM 2661 / JAL-1 / JCM 10045 / NBRC 100440) (Methanococcus jannaschii).